The sequence spans 146 residues: Hemoglobin subunit beta (146 aa).

Valine 1 bears the N-acetylvaline mark. Positions 2-146 (HLTAEEKSAV…VANALAHKYH (145 aa)) constitute a Globin domain. Position 12 is a phosphothreonine (threonine 12). Position 59 is an N6-acetyllysine (lysine 59). Histidine 63 serves as a coordination point for heme b. An N6-acetyllysine modification is found at lysine 82. Residue histidine 92 participates in heme b binding. Position 93 is an S-nitrosocysteine (cysteine 93). An N6-acetyllysine modification is found at lysine 144.

The protein belongs to the globin family. In terms of assembly, heterotetramer of two alpha chains and two beta chains. As to expression, red blood cells.

Its function is as follows. Involved in oxygen transport from the lung to the various peripheral tissues. The polypeptide is Hemoglobin subunit beta (HBB) (Balaenoptera acutorostrata (Common minke whale)).